Here is a 714-residue protein sequence, read N- to C-terminus: Polyribonucleotide nucleotidyltransferase (714 aa).

Residues D489 and D495 each coordinate Mg(2+). Residues 556–615 (PKIDTIKIDVDKIKVVIGKGGETIDKIIAETGVKIDIDEEGNVSIYSSDQDAINRAKEII) form the KH domain. Residues 625 to 693 (GEVYHAKVVR…DKGRIDASMK (69 aa)) form the S1 motif domain. The segment at 691–714 (SMKALVPRPPKPEKSEAKKEGKHD) is disordered. A compositionally biased stretch (basic and acidic residues) spans 700–714 (PKPEKSEAKKEGKHD).

Belongs to the polyribonucleotide nucleotidyltransferase family. Mg(2+) serves as cofactor.

The protein resides in the cytoplasm. The enzyme catalyses RNA(n+1) + phosphate = RNA(n) + a ribonucleoside 5'-diphosphate. Its function is as follows. Involved in mRNA degradation. Catalyzes the phosphorolysis of single-stranded polyribonucleotides processively in the 3'- to 5'-direction. The polypeptide is Polyribonucleotide nucleotidyltransferase (Streptococcus equi subsp. zooepidemicus (strain H70)).